A 218-amino-acid polypeptide reads, in one-letter code: Ribose-5-phosphate isomerase A (218 aa).

Substrate is bound by residues K7, 28–31 (TGST), 81–84 (DGAD), and 94–97 (KGGG). E103 acts as the Proton acceptor in catalysis. Residue K121 participates in substrate binding.

The protein belongs to the ribose 5-phosphate isomerase family. In terms of assembly, homodimer.

It catalyses the reaction aldehydo-D-ribose 5-phosphate = D-ribulose 5-phosphate. It participates in carbohydrate degradation; pentose phosphate pathway; D-ribose 5-phosphate from D-ribulose 5-phosphate (non-oxidative stage): step 1/1. Catalyzes the reversible conversion of ribose-5-phosphate to ribulose 5-phosphate. The protein is Ribose-5-phosphate isomerase A of Vibrio vulnificus (strain YJ016).